We begin with the raw amino-acid sequence, 318 residues long: uncharacterized protein (318 aa).

A coiled-coil region spans residues 67–157; sequence LAFDELEKEK…SLKAIQTSQE (91 aa). Residues 172–318 form a disordered region; it reads ESTNKVEKNA…KGFFARLFNL (147 aa). 2 stretches are compositionally biased toward basic and acidic residues: residues 175 to 193 and 219 to 236; these read NKVEKNAVTEDKADSKDSK and KVDKEDQISATEAIEKAS. The segment covering 237–248 has biased composition (polar residues); sequence VEQSKNGNAAET. Basic and acidic residues-rich tracts occupy residues 249–274 and 300–310; these read SNKEATIDAEAQHDAEQQVAEAHAEA and SEPKPQEEKKG.

This is an uncharacterized protein from Staphylococcus aureus (strain MW2).